The sequence spans 91 residues: Probable Fe(2+)-trafficking protein (91 aa).

The protein belongs to the Fe(2+)-trafficking protein family. In terms of assembly, monomer.

Could be a mediator in iron transactions between iron acquisition and iron-requiring processes, such as synthesis and/or repair of Fe-S clusters in biosynthetic enzymes. The chain is Probable Fe(2+)-trafficking protein from Salmonella agona (strain SL483).